A 360-amino-acid polypeptide reads, in one-letter code: Mannitol-1-phosphate 5-dehydrogenase (360 aa).

6–17 provides a ligand contact to NAD(+); that stretch reads ALHFGAGNIGRG.

Belongs to the mannitol dehydrogenase family.

The enzyme catalyses D-mannitol 1-phosphate + NAD(+) = beta-D-fructose 6-phosphate + NADH + H(+). In Mycoplasmopsis pulmonis (strain UAB CTIP) (Mycoplasma pulmonis), this protein is Mannitol-1-phosphate 5-dehydrogenase.